A 212-amino-acid polypeptide reads, in one-letter code: Ras-related protein Rab-2A (212 aa).

A2 is subject to N-acetylalanine. The segment at A2–K19 is required for interaction with PRKCI. Residues G16, V17, G18, K19, S20, C21, and T38 each coordinate GTP. S20 is a binding site for Mg(2+). The Switch 1 signature appears at L37–E42. T38 and D61 together coordinate Mg(2+). The short motif at A63–T72 is the Switch 2 element. GTP contacts are provided by G64, N119, K120, D122, A150, and K151. A disordered region spans residues Q190 to C212. Residues G200 to C212 are compositionally biased toward gly residues. 2 S-geranylgeranyl cysteine lipidation sites follow: C211 and C212.

This sequence belongs to the small GTPase superfamily. Rab family. As to quaternary structure, interacts with PRKCI. Interacts with TRIP11. Interacts (in GTP-bound form) with GARIN1B. Interacts (GTP-bound) with HOPS complex component VPS39; interaction contributes to obtaining a functional HOPS complex that promotes autophagosome-lysosome membrane fusion driven by STX17-SNAP29-VAMP8. May interact with VPS41. Mg(2+) is required as a cofactor. In terms of processing, prenylated. Prenylation is required for association with cellular membranes.

It localises to the endoplasmic reticulum-Golgi intermediate compartment membrane. The protein localises to the melanosome. Its subcellular location is the endoplasmic reticulum membrane. The protein resides in the golgi apparatus membrane. It is found in the cytoplasmic vesicle. It localises to the secretory vesicle. The protein localises to the acrosome. Its subcellular location is the autophagosome membrane. It carries out the reaction GTP + H2O = GDP + phosphate + H(+). Its activity is regulated as follows. Regulated by guanine nucleotide exchange factors (GEFs) which promote the exchange of bound GDP for free GTP, GTPase activating proteins (GAPs) which increase the GTP hydrolysis activity, and GDP dissociation inhibitors (GDIs) which inhibit the dissociation of the nucleotide from the GTPase. In terms of biological role, the small GTPases Rab are key regulators of intracellular membrane trafficking, from the formation of transport vesicles to their fusion with membranes. Rabs cycle between active GTP-bound and inactive GDP-bound states. In their active state, drive transport of vesicular carriers from donor organelles to acceptor organelles to regulate the membrane traffic that maintains organelle identity and morphology. RAB2A regulates autophagy by promoting autophagosome-lysosome fusion via recruitment of the HOPS endosomal tethering complex; this process involves autophagosomal RAB2A and lysosomal RAB39A recruitment of HOPS subcomplexes VPS39-VPS11 and VPS41-VPS16-VPS18-VPS33A, respectively, which assemble into a functional complex to mediate membrane tethering and SNAREs-driven membrane fusion. Required for protein transport from the endoplasmic reticulum to the Golgi complex. Regulates the compacted morphology of the Golgi. Together with RAB2B, redundantly required for efficient autophagic flux. In Rattus norvegicus (Rat), this protein is Ras-related protein Rab-2A (Rab2a).